The primary structure comprises 160 residues: S-ribosylhomocysteine lyase (160 aa).

Residues His-57, His-61, and Cys-127 each contribute to the Fe cation site.

This sequence belongs to the LuxS family. As to quaternary structure, homodimer. Fe cation serves as cofactor.

The catalysed reaction is S-(5-deoxy-D-ribos-5-yl)-L-homocysteine = (S)-4,5-dihydroxypentane-2,3-dione + L-homocysteine. In terms of biological role, involved in the synthesis of autoinducer 2 (AI-2) which is secreted by bacteria and is used to communicate both the cell density and the metabolic potential of the environment. The regulation of gene expression in response to changes in cell density is called quorum sensing. Catalyzes the transformation of S-ribosylhomocysteine (RHC) to homocysteine (HC) and 4,5-dihydroxy-2,3-pentadione (DPD). This is S-ribosylhomocysteine lyase from Streptococcus pyogenes serotype M2 (strain MGAS10270).